A 792-amino-acid polypeptide reads, in one-letter code: Phenylalanine--tRNA ligase beta subunit (792 aa).

The 109-residue stretch at 39–147 (GESLGQVVVA…DDAPVGQALA (109 aa)) folds into the tRNA-binding domain. A B5 domain is found at 400 to 475 (PQPARILLRR…RIHGYDRVPT (76 aa)). The Mg(2+) site is built by D453, D459, E462, and D463. The FDX-ACB domain occupies 698–791 (SRFPSVRRDL…IEREHRARIR (94 aa)).

The protein belongs to the phenylalanyl-tRNA synthetase beta subunit family. Type 1 subfamily. Tetramer of two alpha and two beta subunits. Mg(2+) serves as cofactor.

It is found in the cytoplasm. The catalysed reaction is tRNA(Phe) + L-phenylalanine + ATP = L-phenylalanyl-tRNA(Phe) + AMP + diphosphate + H(+). The sequence is that of Phenylalanine--tRNA ligase beta subunit from Xanthomonas oryzae pv. oryzae (strain KACC10331 / KXO85).